A 535-amino-acid polypeptide reads, in one-letter code: Glutamate--cysteine ligase (535 aa).

It belongs to the glutamate--cysteine ligase type 1 family. Type 1 subfamily.

It catalyses the reaction L-cysteine + L-glutamate + ATP = gamma-L-glutamyl-L-cysteine + ADP + phosphate + H(+). It participates in sulfur metabolism; glutathione biosynthesis; glutathione from L-cysteine and L-glutamate: step 1/2. The sequence is that of Glutamate--cysteine ligase from Pseudomonas savastanoi pv. phaseolicola (strain 1448A / Race 6) (Pseudomonas syringae pv. phaseolicola (strain 1448A / Race 6)).